An 846-amino-acid chain; its full sequence is Homeodomain-interacting protein kinase 1 (846 aa).

The disordered stretch occupies residues asparagine 47–alanine 74. Basic and acidic residues predominate over residues asparagine 61–glutamate 72. In terms of domain architecture, Protein kinase spans tyrosine 147–valine 483. Residues leucine 153–valine 161 and lysine 176 contribute to the ATP site. The Proton acceptor role is filled by aspartate 272. The tract at residues leucine 741–methionine 790 is disordered. Residues lysine 746–leucine 757 show a composition bias toward polar residues. Residues asparagine 764–serine 773 show a composition bias toward low complexity.

It belongs to the protein kinase superfamily. CMGC Ser/Thr protein kinase family. HIPK subfamily. As to expression, broadly expressed during embryogenesis. Expression becomes more restricted during larval development. L3 larvae display robust expression in many head and motor neurons, and lower levels of expression in the intestine and the seam cells of the hypodermis. By late L4 stage, expression is largely restricted to neurons and is maintained in nerve cells of the head and nerve cord during adulthood. Expressed in adult pharyngeal cells, hypodermal cells, gonadal sheath cells and distal tip cells but not in germline cells. Expressed in serotonergic neurons such as ADF and NSM and in GABAergic neurons, including RME, RIS and DVB.

The protein resides in the nucleus. The enzyme catalyses L-seryl-[protein] + ATP = O-phospho-L-seryl-[protein] + ADP + H(+). The catalysed reaction is L-threonyl-[protein] + ATP = O-phospho-L-threonyl-[protein] + ADP + H(+). Serine/threonine-protein kinase required in the somatic gonadal cells to regulate germline proliferation during larval development and in adulthood. Plays a role in the development/differentiation of gonadal distal tip cells. Required for normal lifespan in a pha-4 and mxl-2-dependent manner. Also contributes to survival following heat or oxidative stress. Prevents sumoylation and inactivation of heat shock transcription factor hsf-1 which enhances hsf-1-dependent transcriptional induction of chaperones in response to heat shock. Also required for hormetic extension of longevity in response to heat stress. Also contributes to longevity by promoting autophagy under nutrient stress conditions through induction of autophagosome formation and autophagy gene expression. Provides protection against proteotoxic polyglutamine aggregate and the associated locomotory toxicity, probably as a result of kinase activity. Contributes to longevity via gamma-aminobutyric acid (GABA)ergic signaling by promoting autophagy through mxl-2, hlh-30 and daf-16 but independent of hsf-1 and phas-4, to induce autophagosome formation and the expression of autophagy genes. Promotes thermotolerance via serotonergic signaling by serotonergic neurons. Preserves neuronal function in aging animals by mitigating against age-associated decline in axonal and synaptic transmissions. Acts as an activator of nhr-49-dependent hypoxia response, including the up-regulation of fmo-2 and acs-2, the induction of autophagosome formation and expression of autophagy genes. The polypeptide is Homeodomain-interacting protein kinase 1 (Caenorhabditis elegans).